The primary structure comprises 507 residues: ATP synthase subunit alpha (507 aa).

169-176 (GDRQIGKT) provides a ligand contact to ATP.

It belongs to the ATPase alpha/beta chains family. F-type ATPases have 2 components, CF(1) - the catalytic core - and CF(0) - the membrane proton channel. CF(1) has five subunits: alpha(3), beta(3), gamma(1), delta(1), epsilon(1). CF(0) has three main subunits: a(1), b(2) and c(9-12). The alpha and beta chains form an alternating ring which encloses part of the gamma chain. CF(1) is attached to CF(0) by a central stalk formed by the gamma and epsilon chains, while a peripheral stalk is formed by the delta and b chains.

It is found in the cell inner membrane. It catalyses the reaction ATP + H2O + 4 H(+)(in) = ADP + phosphate + 5 H(+)(out). Functionally, produces ATP from ADP in the presence of a proton gradient across the membrane. The alpha chain is a regulatory subunit. In Desulfotalea psychrophila (strain LSv54 / DSM 12343), this protein is ATP synthase subunit alpha.